The following is a 158-amino-acid chain: SsrA-binding protein (158 aa).

Over residues 133-152 (KRQTLREQQDNREAQREMRE) the composition is skewed to basic and acidic residues. A disordered region spans residues 133 to 158 (KRQTLREQQDNREAQREMRERNRRRG).

This sequence belongs to the SmpB family.

Its subcellular location is the cytoplasm. In terms of biological role, required for rescue of stalled ribosomes mediated by trans-translation. Binds to transfer-messenger RNA (tmRNA), required for stable association of tmRNA with ribosomes. tmRNA and SmpB together mimic tRNA shape, replacing the anticodon stem-loop with SmpB. tmRNA is encoded by the ssrA gene; the 2 termini fold to resemble tRNA(Ala) and it encodes a 'tag peptide', a short internal open reading frame. During trans-translation Ala-aminoacylated tmRNA acts like a tRNA, entering the A-site of stalled ribosomes, displacing the stalled mRNA. The ribosome then switches to translate the ORF on the tmRNA; the nascent peptide is terminated with the 'tag peptide' encoded by the tmRNA and targeted for degradation. The ribosome is freed to recommence translation, which seems to be the essential function of trans-translation. The polypeptide is SsrA-binding protein (Pseudarthrobacter chlorophenolicus (strain ATCC 700700 / DSM 12829 / CIP 107037 / JCM 12360 / KCTC 9906 / NCIMB 13794 / A6) (Arthrobacter chlorophenolicus)).